The sequence spans 557 residues: Small ribosomal subunit protein bS1 (557 aa).

6 consecutive S1 motif domains span residues 21–87 (GSIV…LSRE), 105–171 (SATV…VSRR), 192–260 (GMEV…LGLK), 277–347 (GTKL…LGLK), 364–434 (GDRV…LGVK), and 451–520 (GAIV…LSIR).

This sequence belongs to the bacterial ribosomal protein bS1 family.

Functionally, binds mRNA; thus facilitating recognition of the initiation point. It is needed to translate mRNA with a short Shine-Dalgarno (SD) purine-rich sequence. In Dickeya dadantii (strain 3937) (Erwinia chrysanthemi (strain 3937)), this protein is Small ribosomal subunit protein bS1 (rpsA).